Reading from the N-terminus, the 552-residue chain is Arginine--tRNA ligase (552 aa).

A 'HIGH' region motif is present at residues 130–140 (ANPTGPLSIGH).

The protein belongs to the class-I aminoacyl-tRNA synthetase family. Monomer.

It is found in the cytoplasm. The catalysed reaction is tRNA(Arg) + L-arginine + ATP = L-arginyl-tRNA(Arg) + AMP + diphosphate. This chain is Arginine--tRNA ligase, found in Desulfotalea psychrophila (strain LSv54 / DSM 12343).